Reading from the N-terminus, the 133-residue chain is Small ribosomal subunit protein uS8 (133 aa).

Belongs to the universal ribosomal protein uS8 family. As to quaternary structure, part of the 30S ribosomal subunit. Contacts proteins S5 and S12.

Its function is as follows. One of the primary rRNA binding proteins, it binds directly to 16S rRNA central domain where it helps coordinate assembly of the platform of the 30S subunit. The sequence is that of Small ribosomal subunit protein uS8 from Salinibacter ruber (strain DSM 13855 / M31).